A 344-amino-acid chain; its full sequence is Uroporphyrinogen decarboxylase (344 aa).

Substrate is bound by residues 24 to 28, phenylalanine 43, aspartate 74, tyrosine 149, serine 204, and histidine 319; that span reads RQAGR.

This sequence belongs to the uroporphyrinogen decarboxylase family. In terms of assembly, homodimer.

The protein resides in the cytoplasm. The enzyme catalyses uroporphyrinogen III + 4 H(+) = coproporphyrinogen III + 4 CO2. The protein operates within porphyrin-containing compound metabolism; protoporphyrin-IX biosynthesis; coproporphyrinogen-III from 5-aminolevulinate: step 4/4. Functionally, catalyzes the decarboxylation of four acetate groups of uroporphyrinogen-III to yield coproporphyrinogen-III. This chain is Uroporphyrinogen decarboxylase, found in Agrobacterium fabrum (strain C58 / ATCC 33970) (Agrobacterium tumefaciens (strain C58)).